The chain runs to 470 residues: Bifunctional protein ArgHA (470 aa).

Residues 1-470 are argininosuccinate lyase; that stretch reads MALWGGRFSQ…TSGISIRAAR (470 aa).

The protein in the N-terminal section; belongs to the lyase 1 family. Argininosuccinate lyase subfamily. This sequence in the C-terminal section; belongs to the acetyltransferase family. ArgA subfamily.

The protein localises to the cytoplasm. The enzyme catalyses 2-(N(omega)-L-arginino)succinate = fumarate + L-arginine. It carries out the reaction L-glutamate + acetyl-CoA = N-acetyl-L-glutamate + CoA + H(+). Its pathway is amino-acid biosynthesis; L-arginine biosynthesis; N(2)-acetyl-L-ornithine from L-glutamate: step 1/4. It participates in amino-acid biosynthesis; L-arginine biosynthesis; L-arginine from L-ornithine and carbamoyl phosphate: step 3/3. The polypeptide is Bifunctional protein ArgHA (argHA) (Moritella profunda).